Reading from the N-terminus, the 70-residue chain is ATP synthase subunit c (70 aa).

The next 2 helical transmembrane spans lie at 4–24 and 47–67; these read IAAG…NGLV and FIGV…ALMV.

Belongs to the ATPase C chain family. In terms of assembly, F-type ATPases have 2 components, F(1) - the catalytic core - and F(0) - the membrane proton channel. F(1) has five subunits: alpha(3), beta(3), gamma(1), delta(1), epsilon(1). F(0) has three main subunits: a(1), b(2) and c(10-14). The alpha and beta chains form an alternating ring which encloses part of the gamma chain. F(1) is attached to F(0) by a central stalk formed by the gamma and epsilon chains, while a peripheral stalk is formed by the delta and b chains.

Its subcellular location is the cell membrane. Functionally, f(1)F(0) ATP synthase produces ATP from ADP in the presence of a proton or sodium gradient. F-type ATPases consist of two structural domains, F(1) containing the extramembraneous catalytic core and F(0) containing the membrane proton channel, linked together by a central stalk and a peripheral stalk. During catalysis, ATP synthesis in the catalytic domain of F(1) is coupled via a rotary mechanism of the central stalk subunits to proton translocation. Key component of the F(0) channel; it plays a direct role in translocation across the membrane. A homomeric c-ring of between 10-14 subunits forms the central stalk rotor element with the F(1) delta and epsilon subunits. The protein is ATP synthase subunit c of Lactiplantibacillus plantarum (strain ATCC BAA-793 / NCIMB 8826 / WCFS1) (Lactobacillus plantarum).